We begin with the raw amino-acid sequence, 234 residues long: Octanoyltransferase (234 aa).

Residues Pro-42–Thr-226 enclose the BPL/LPL catalytic domain. Substrate contacts are provided by residues Arg-81–His-88, Ser-157–Gly-159, and Gly-170–Ala-172. Cys-188 acts as the Acyl-thioester intermediate in catalysis.

It belongs to the LipB family.

Its subcellular location is the cytoplasm. The enzyme catalyses octanoyl-[ACP] + L-lysyl-[protein] = N(6)-octanoyl-L-lysyl-[protein] + holo-[ACP] + H(+). The protein operates within protein modification; protein lipoylation via endogenous pathway; protein N(6)-(lipoyl)lysine from octanoyl-[acyl-carrier-protein]: step 1/2. Its function is as follows. Catalyzes the transfer of endogenously produced octanoic acid from octanoyl-acyl-carrier-protein onto the lipoyl domains of lipoate-dependent enzymes. Lipoyl-ACP can also act as a substrate although octanoyl-ACP is likely to be the physiological substrate. The polypeptide is Octanoyltransferase (Aeromonas hydrophila subsp. hydrophila (strain ATCC 7966 / DSM 30187 / BCRC 13018 / CCUG 14551 / JCM 1027 / KCTC 2358 / NCIMB 9240 / NCTC 8049)).